We begin with the raw amino-acid sequence, 130 residues long: Small ribosomal subunit protein uS9 (130 aa).

Residues 109–130 form a disordered region; the sequence is RMKERKKYGLKAARRAPQFSKR. Residues 111 to 130 show a composition bias toward basic residues; the sequence is KERKKYGLKAARRAPQFSKR.

The protein belongs to the universal ribosomal protein uS9 family.

The polypeptide is Small ribosomal subunit protein uS9 (Lachnoclostridium phytofermentans (strain ATCC 700394 / DSM 18823 / ISDg) (Clostridium phytofermentans)).